An 808-amino-acid chain; its full sequence is Sucrose synthase (808 aa).

The GT-B glycosyltransferase stretch occupies residues 271–753; that stretch reads MLFRIALISP…GIERVYSTYT (483 aa).

Belongs to the glycosyltransferase 1 family. Probably a homotetramer.

It carries out the reaction an NDP-alpha-D-glucose + D-fructose = a ribonucleoside 5'-diphosphate + sucrose + H(+). It catalyses the reaction ADP-alpha-D-glucose + D-fructose = sucrose + ADP + H(+). In terms of biological role, catalyzes the reversible conversion of sucrose and a nucleotide disphosphate (NDP) into fructose and NDP-glucose; although the reaction is freely reversible in vitro, the physiological reaction seems to be sucrose cleavage. Unlike characterized plant enzymes prefers ADP as a cosubstrate, whereas plants prefer UDP. Its preference for ADP over UDP suggests it may directly link sucrose and glycogen metabolism. In Thermosynechococcus vestitus (strain NIES-2133 / IAM M-273 / BP-1), this protein is Sucrose synthase.